The sequence spans 5098 residues: Malformin synthetase mlfA (5098 aa).

The adenylation 1 stretch occupies residues 225 to 616 (ERHAANRPHS…CGRADTQVKL (392 aa)). Positions 756–829 (SRLEQEIQLA…EAASLAKVQE (74 aa)) constitute a Carrier 1 domain. An O-(pantetheine 4'-phosphoryl)serine modification is found at serine 790. The interval 867–1298 (EDVFPCTTMQ…ALDSLTLLQA (432 aa)) is condensation 1. Residues 1326-1715 (DGWVTRQPES…GRKDTQVKLR (390 aa)) are adenylation 2. One can recognise a Carrier 2 domain in the interval 1853-1930 (TAASELERTL…QLAAEFGEPA (78 aa)). At serine 1890 the chain carries O-(pantetheine 4'-phosphoryl)serine. 2 disordered regions span residues 1930–1960 (AGQSASSASSTTEEGFTFSTPDDSSTNDGVD) and 1993–2022 (GSSSSSKTPSGSSSSSSSSSRKKKSARVVS). Composition is skewed to low complexity over residues 1933-1957 (SASSASSTTEEGFTFSTPDDSSTND) and 1993-2011 (GSSSSSKTPSGSSSSSSSS). Residues 2063–2478 (EDIYPATALQ…ALSHSDRQTL (416 aa)) form a condensation 2 region. Residues 2501–2893 (VRTPHAPAVC…IGRRDGQLKL (393 aa)) are adenylation 3. A Carrier 3 domain is found at 3029 to 3105 (RPVTAQEREM…QLMRHLSATR (77 aa)). Serine 3066 carries the post-translational modification O-(pantetheine 4'-phosphoryl)serine. Condensation regions lie at residues 3122–3587 (WVAL…TYDQ) and 3608–4027 (NIYP…EQLM). The segment at 4052–4442 (HASREAVCAW…VGRKDNQIKF (391 aa)) is adenylation 4. Residues 4576 to 4652 (MPSTAAERKM…DLAYRTTNLV (77 aa)) form the Carrier 4 domain. Serine 4613 carries the post-translational modification O-(pantetheine 4'-phosphoryl)serine. The interval 4689–5016 (DVLPTTSFQR…LQTIVQHQNN (328 aa)) is condensation 5.

The protein belongs to the NRP synthetase family.

Its pathway is secondary metabolite biosynthesis. In terms of biological role, nonribosomal peptide synthetase; part of the gene cluster that mediates the biosynthesis of malformins, cyclic pentapeptides with a disulfide bond between 2 consecutive cysteins, that show potential anti-tumor as well as antimalarial and antitrypanosomal properties. The nonribosomal peptide synthetase mlfA is responsible of the formation of the cyclic pentapeptide. The malformin biosynthesis clusters in malformin-producing fungi also contain enzymes involved in the formation of the disulfide bond between the two consecutive cysteins within malformins, in addition to additional tailoring enzymes such as methyltransferases or oxidoreductases. They are also composed of up to 4 major facilitator superfamily transporters, and transcription factors probably involved in the regulation of the expression of those clusters. This Aspergillus homomorphus (strain CBS 101889) protein is Malformin synthetase mlfA.